A 128-amino-acid chain; its full sequence is UPF0325 protein CKO_03204 (128 aa).

It belongs to the UPF0325 family.

The protein is UPF0325 protein CKO_03204 of Citrobacter koseri (strain ATCC BAA-895 / CDC 4225-83 / SGSC4696).